A 205-amino-acid chain; its full sequence is Putative 3-methyladenine DNA glycosylase (205 aa).

The protein belongs to the DNA glycosylase MPG family.

In Bacillus cereus (strain Q1), this protein is Putative 3-methyladenine DNA glycosylase.